We begin with the raw amino-acid sequence, 422 residues long: Enolase (422 aa).

Residue Gln162 participates in (2R)-2-phosphoglycerate binding. Glu204 serves as the catalytic Proton donor. 3 residues coordinate Mg(2+): Asp241, Glu284, and Asp311. Positions 336, 365, 366, and 387 each coordinate (2R)-2-phosphoglycerate. Lys336 functions as the Proton acceptor in the catalytic mechanism.

Belongs to the enolase family. The cofactor is Mg(2+).

The protein resides in the cytoplasm. Its subcellular location is the secreted. It is found in the cell surface. It catalyses the reaction (2R)-2-phosphoglycerate = phosphoenolpyruvate + H2O. It participates in carbohydrate degradation; glycolysis; pyruvate from D-glyceraldehyde 3-phosphate: step 4/5. In terms of biological role, catalyzes the reversible conversion of 2-phosphoglycerate (2-PG) into phosphoenolpyruvate (PEP). It is essential for the degradation of carbohydrates via glycolysis. The chain is Enolase from Bartonella tribocorum (strain CIP 105476 / IBS 506).